The following is a 250-amino-acid chain: Testis-expressed protein 101 (250 aa).

Residues 1-25 form the signal peptide; the sequence is MGACRIQYILLVFLLIASHWTLVQN. Residues asparagine 45, asparagine 110, asparagine 134, and asparagine 160 are each glycosylated (N-linked (GlcNAc...) asparagine). A UPAR/Ly6 domain is found at 141 to 215; it reads CPTCLALEPC…VKETCSYQSF (75 aa). Glycine 224 carries GPI-anchor amidated glycine lipidation. The propeptide at 225-250 is removed in mature form; sequence ASWMPTSLWVLELLLPALSLPLIYFP.

In terms of assembly, interacts with VAMP3. Interacts with LY6K. Interacts with DPEP3; co-localized on the cell surface of spermatocytes, spermatids, and testicular spermatozoa, co-localized only in cytoplasmic droplets of caput and corpus epididymal sperm. Interacts with ADAM5. Post-translationally, N-glycosylated; by high mannose and/or biantennary complex and/or certain types of hybrid oligosaccharides; possesses different oligosaccharides chains according to its subcellular localization in the testis. In terms of processing, sheds from membrane raft by ACE and released from the cell surface of epididymal sperm while it passes through the caput epididymis leading to disappearance of TEX101 on spermatozoa; is essential to produce fertile spermatozoa. As to expression, detected in testis.

The protein resides in the cell membrane. It localises to the membrane raft. It is found in the cytoplasmic vesicle. The protein localises to the secretory vesicle. Its subcellular location is the acrosome. The protein resides in the secreted. Functionally, plays a role in fertilization by controlling binding of sperm to zona pellucida and migration of spermatozoa into the oviduct. May play a role in signal transduction and promote protein tyrosine phosphorylation. The polypeptide is Testis-expressed protein 101 (Rattus norvegicus (Rat)).